A 233-amino-acid chain; its full sequence is Large ribosomal subunit protein uL1 (233 aa).

It belongs to the universal ribosomal protein uL1 family. In terms of assembly, part of the 50S ribosomal subunit.

Its function is as follows. Binds directly to 23S rRNA. The L1 stalk is quite mobile in the ribosome, and is involved in E site tRNA release. Functionally, protein L1 is also a translational repressor protein, it controls the translation of the L11 operon by binding to its mRNA. This is Large ribosomal subunit protein uL1 from Proteus vulgaris.